The primary structure comprises 75 residues: DNA-directed RNA polymerase subunit epsilon (75 aa).

It belongs to the RNA polymerase subunit epsilon family. As to quaternary structure, RNAP is composed of a core of 2 alpha, a beta and a beta' subunit. The core is associated with a delta subunit, and at least one of epsilon or omega. When a sigma factor is associated with the core the holoenzyme is formed, which can initiate transcription.

It carries out the reaction RNA(n) + a ribonucleoside 5'-triphosphate = RNA(n+1) + diphosphate. In terms of biological role, a non-essential component of RNA polymerase (RNAP). In Lactobacillus johnsonii (strain CNCM I-12250 / La1 / NCC 533), this protein is DNA-directed RNA polymerase subunit epsilon.